We begin with the raw amino-acid sequence, 251 residues long: Probable transcriptional regulatory protein BLD_0450 (251 aa).

This sequence belongs to the TACO1 family.

It is found in the cytoplasm. This chain is Probable transcriptional regulatory protein BLD_0450, found in Bifidobacterium longum (strain DJO10A).